We begin with the raw amino-acid sequence, 225 residues long: MAELKSLSGDAYLALSHGYAAAAAGLAYGAAREPEAARGYGTPGPGGDLPAAPAPRAPAQAAESSGEQSGDEDDAFEQRRRRRGPGSAADGRRRPREQRSLRLSINARERRRMHDLNDALDGLRAVIPYAHSPSVRKLSKIATLLLAKNYILMQAQALDEMRRLVAFLNQGQGLAAPVNAAPLTPFGQATVCPFSAGAALGPCPDKCAAFSGTPSALCKHCHEKP.

Residues 35–104 (EAARGYGTPG…PREQRSLRLS (70 aa)) are disordered. The region spanning 100–154 (SLRLSINARERRRMHDLNDALDGLRAVIPYAHSPSVRKLSKIATLLLAKNYILMQ) is the bHLH domain.

It is found in the nucleus. Its function is as follows. May function as transcriptional repressor. May modulate the expression of genes required for the differentiation and/or maintenance of pancreatic and neuronal cell types. May be important for rod bipolar cell maturation. This Homo sapiens (Human) protein is Class E basic helix-loop-helix protein 23 (BHLHE23).